We begin with the raw amino-acid sequence, 471 residues long: Variant surface glycoprotein ILTAT 1.1BC (471 aa).

A signal peptide spans 1–21; the sequence is MVKAIASLMLLHIWAIEEIKA. N-linked (GlcNAc...) asparagine glycosylation occurs at Asn130. Positions 158-168 are enriched in polar residues; that stretch reads TVSKTTECNTE. 2 disordered regions span residues 158 to 183 and 204 to 232; these read TVSK…TLSK and GGAC…TTAS. A compositionally biased stretch (basic and acidic residues) spans 214–226; sequence DKIHITNETDSKN. Asn220 and Asn260 each carry an N-linked (GlcNAc...) asparagine glycan. Intrachain disulfides connect Cys397–Cys410 and Cys406–Cys421. Residues 432 to 454 are disordered; that stretch reads AEQAATNQETEGKDGKTTNTTGS. Asn450 carries an N-linked (GlcNAc...) asparagine glycan. Ser454 carries GPI-anchor amidated serine lipidation. The propeptide at 455–471 is removed in mature form; that stretch reads NSFLINKAPVLLAFLLL.

Its subcellular location is the cell membrane. VSG forms a coat on the surface of the parasite. The trypanosome evades the immune response of the host by expressing a series of antigenically distinct VSGs from an estimated 1000 VSG genes. The protein is Variant surface glycoprotein ILTAT 1.1BC of Trypanosoma brucei brucei.